A 248-amino-acid polypeptide reads, in one-letter code: Small ribosomal subunit protein uS5 (248 aa).

Residues 1–87 (MEDKKLSSAK…NPRFQRNNKD (87 aa)) form a disordered region. Residues 8 to 23 (SAKPATSSKPAPKAPS) are compositionally biased toward low complexity. The span at 57-87 (VAFEKRNFTSGDKTKKPTDSKNPRFQRNNKD) shows a compositional bias: basic and acidic residues. Positions 94-157 (YEEKIVDIAR…KDAHNNLVEV (64 aa)) constitute an S5 DRBM domain.

This sequence belongs to the universal ribosomal protein uS5 family. Part of the 30S ribosomal subunit. Contacts proteins S4 and S8.

In terms of biological role, with S4 and S12 plays an important role in translational accuracy. Functionally, located at the back of the 30S subunit body where it stabilizes the conformation of the head with respect to the body. The sequence is that of Small ribosomal subunit protein uS5 from Mycoplasmopsis synoviae (strain 53) (Mycoplasma synoviae).